Reading from the N-terminus, the 153-residue chain is Sperm surface protein Sp17 (153 aa).

The tract at residues 74–117 (FKVPSGATESKEAPPEKSEPEKETPQEVVKEQETQVSFVEEVST) is disordered. Over residues 82–106 (ESKEAPPEKSEPEKETPQEVVKEQE) the composition is skewed to basic and acidic residues. An IQ domain is found at 122 to 151 (AAAAAVKIQAAFRGHKARKEVKIMKESSIE).

As to quaternary structure, homodimer. May interact with ROPN1. Testis- and sperm-specific.

The protein localises to the membrane. Its function is as follows. Sperm surface zona pellucida binding protein. Helps to bind spermatozoa to the zona pellucida with high affinity. Might function in binding zona pellucida and carbohydrates. In Notamacropus eugenii (Tammar wallaby), this protein is Sperm surface protein Sp17 (SPA17).